The sequence spans 196 residues: Dual-action ribosomal maturation protein DarP (196 aa).

This sequence belongs to the DarP family.

It is found in the cytoplasm. Member of a network of 50S ribosomal subunit biogenesis factors which assembles along the 30S-50S interface, preventing incorrect 23S rRNA structures from forming. Promotes peptidyl transferase center (PTC) maturation. This chain is Dual-action ribosomal maturation protein DarP, found in Stenotrophomonas maltophilia (strain R551-3).